Here is an 831-residue protein sequence, read N- to C-terminus: Zinc transporter ZIP10 (831 aa).

A signal peptide spans 1-25; the sequence is MKVHMHTKFCLICLLTFIFHHCNHC. The tract at residues 126-318 is disordered; the sequence is HNHQHSHNHL…RKREAPHVKN (193 aa). Over residues 138-147 the composition is skewed to polar residues; the sequence is ENQTVTSVST. N139 carries an N-linked (GlcNAc...) asparagine glycan. The span at 152–171 shows a compositional bias: basic and acidic residues; the sequence is KCDPEKETVEVSVKSDDKHM. Positions 172-188 are enriched in basic residues; sequence HDHNHRLRHHHRLHHHL. The span at 189 to 198 shows a compositional bias: basic and acidic residues; it reads DHNNTHHFHN. N198 and N218 each carry an N-linked (GlcNAc...) asparagine glycan. Positions 211–221 are enriched in polar residues; the sequence is NEPSTETNKTQ. The segment covering 229 to 238 has biased composition (basic residues); it reads PKGKRKKKGR. Composition is skewed to basic and acidic residues over residues 256–273 and 281–315; these read DQGEQYEHNRVHKPDRVH and HLPERNGHDPGRGHQDLDPDNEGELRHTRKREAPH. N-linked (GlcNAc...) asparagine glycosylation occurs at N339. Transmembrane regions (helical) follow at residues 411-431 and 438-458; these read IISITVISLLSLLGVILVPII and FLLTFLVALAVGTMSGDALLH. A disordered region spans residues 464–484; it reads QGGHDHSHQHAHGHGHSHGHE. The chain crosses the membrane as a helical span at residues 495–515; it reads VLKGLVALGGIYLLFIIEHCI. T536 and T553 each carry phosphothreonine. A Phosphoserine modification is found at S591. Helical transmembrane passes span 687–707, 732–752, 759–779, and 801–821; these read AIGAAFSAGLTGGISTSIAVF, IVYNLLSAMMAYIGMLIGTAV, ITLWIFAVTAGMFLYVALVDM, and FILQNLGLLFGFAIMLVIALY.

It belongs to the ZIP transporter (TC 2.A.5) family. In terms of assembly, interacts with SLC39A6; which triggers cells to undergo EMT and mitosis. Found in a complex with SLC39A6, SLC39A10 and with the 'Ser-727' phosphorylated form of STAT3 throughout mitosis. Found in a complex with SLC39A6, SLC39A10 and with NCAM1; this complex controls NCAM1 phosphorylation and integration into focal adhesion complexes during epithelial-tomesenchymal transition. Found in a complex with SLC39A6, SLC39A10 and with GSK3B that controls NCAM1 phosphorylation. Post-translationally, undergoes N-terminal ectodomain shedding.

It localises to the cell membrane. Its subcellular location is the apical cell membrane. The catalysed reaction is Zn(2+)(in) = Zn(2+)(out). Zinc-influx transporter. When associated with SLC39A6, the heterodimer formed by SLC39A10 and SLC39A6 mediates cellular zinc uptake to trigger cells to undergo epithelial-to-mesenchymal transition (EMT). SLC39A10-SLC39A6 heterodimers play also an essentiel role in initiating mitosis by importing zinc into cells to initiate a pathway resulting in the onset of mitosis. Plays an important for both mature B-cell maintenance and humoral immune responses. When associated with SLC39A10, the heterodimer controls NCAM1 phosphorylation and integration into focal adhesion complexes during EMT. The sequence is that of Zinc transporter ZIP10 from Homo sapiens (Human).